The chain runs to 1228 residues: MGRLLRLEVENFKSYRGHQIIGPFEDFTSIIGPNGAGKSNLMDAISFVLGVKSSHLRSTNVKELIYRGKILQRDNTDFTDSSNPTTAYVKLMYELDNGEQREYKRAITPSGATEYKIDEEIVTFSEYCGSLQKENILVRARNFLVFQGDVETIASQSPLELSKLVEQISGSLEYKSEYDKSKDEQDKAVNLSAHSFNKKRGINAELRQYQEQKTEAERYQSQKEKRDSAQLVYLLWKLFHLEKSISSNMAEVTRLKADSIQLIERRDENTKEIEKLKEKEGSIRRNLLAFDRKVRKQEKLIASKRPELISIAEKALESKSNLRKIQRKAAEIEKDYSDQASTLQVLENQLTSLSAAEKEFLKDMQEKEQLKGLRLLPEDKEEYEGLRSEADKLNSNLLFKLQTLNRNIKVTSQSKDSLTSIVGDLESKIKSLHESVSSLDTERADLLAKINEKIESLELEKHDQQKKRLTYSELFHKTQELNEELQSCLQKILEASADRNESKQDAKKREALYALKRIYPEVKGRIIDLCTPTQKKYESAIAAALGKNFDAIVVETQAVAKECIDYIKEQRIGIMTFFPMDTIAASPVNQKFRGTHKGARLAIDVLNFESEYERVMISAVGNTLICDSMTVARDLSYNKRLNAKTVTLEGTVIHKTGLITGGSSNNRSAKHWDDHDFDLLTQTKDRLMHQIGEIEYQKSSCVITESDTVKLHSLESEISLLKDKYTVVSRSVEDKKKEIGHYESLIKEKQPHLSELEMELRNFVKSRDELQIQVEKVEEKIFSGFCKRIGISDIHTYDEIHRTFTQSFTQKQLEFTKQKSLLENRISFEKQRVSDTRLRLERMHKFIEKDQESIDNYEQNREALESEVATAEAELELLKEDFASENSKTEKILLAASEKKLVGKRLVSELTKLSGNITLLESEIDRYVSEWHAILRKCKLEDIDVPLREGSLTSIPIDDVSNSGDITMGEEPSEPVINFEKFGVEVDYDELDEELRNDGSESMASVLQEKLREYSEELDQMSPNLRAIERLETVETRLAKLDEEFAAARKAAKNAKERFNAVKQKRLQKFQAAFSHISEQIDPIYKELTKSPAFPLGGTAYLTLDDLDEPYLGGIKFHAMPPMKRFRDMDQLSGGEKTMAALALLFAIHSYQPSPFFVLDEIDAALDQTNVTKIANYIRQHASSGFQFVVISLKNQLFSKSEALVGIYRDQQENSSRTLSINLEGYVE.

Residue 32–39 (GPNGAGKS) participates in ATP binding. A coiled-coil region spans residues 197-510 (NKKRGINAEL…ESKQDAKKRE (314 aa)). The SMC hinge domain maps to 522–635 (VKGRIIDLCT…CDSMTVARDL (114 aa)). 3 coiled-coil regions span residues 710 to 783 (KLHS…KIFS), 814 to 926 (EFTK…EIDR), and 984 to 1068 (VEVD…KRLQ).

It belongs to the SMC family. SMC1 subfamily. In terms of assembly, cohesin complexes are composed of the psm1/smc1 and psm3/smc3 heterodimer attached via their SMC hinge domain, rad21/scc1 which link them, and psc3/scc3, which interacts with rad21.

It is found in the nucleus. It localises to the chromosome. Its function is as follows. Involved in chromosome cohesion during cell cycle and in DNA repair. Central component of cohesin complex. The cohesin complex is required for the cohesion of sister chromatids after DNA replication. The cohesin complex apparently forms a large proteinaceous ring within which sister chromatids can be trapped. At anaphase, the complex is cleaved and dissociates from chromatin, allowing sister chromatids to segregate. In Schizosaccharomyces pombe (strain 972 / ATCC 24843) (Fission yeast), this protein is Structural maintenance of chromosomes protein 1 (psm1).